The primary structure comprises 249 residues: Protein obstructor-E (249 aa).

The N-terminal stretch at 1-21 (MAKILISALLCVAMFGSMALG) is a signal peptide. The Chitin-binding type-2 1 domain occupies 22-80 (SPECPTPNGRFASGDQCDSYTECQDGTPVEKLCPDGLLFHQRTKATGECTYAPYSTCKE). Cysteine 54 and cysteine 70 are oxidised to a cystine. The N-linked (GlcNAc...) asparagine glycan is linked to asparagine 88. 2 consecutive Chitin-binding type-2 domains span residues 90-148 (TEEC…SCNA) and 170-227 (VDVS…ECYA). 2 disulfide bridges follow: cysteine 124/cysteine 137 and cysteine 203/cysteine 216.

Uniformly expressed throughout the cuticle of third instar larva.

Its subcellular location is the secreted. It is found in the extracellular space. The protein resides in the extracellular matrix. Its function is as follows. Chitin-binding protein that is important for the longitudinal contraction and lateral expansion of the larval cuticle during its conversion into the oval-shaped puparium case. Essential for survival to the second instar larval stage. Confers the orientated contractility and expandability of the larval cuticle by regulating the arrangement of chitin and the formation of supracellular ridges on the cuticle of third instar larvae. Essential for determining pupal body shape; required for the orientated shape change of the cuticle during metamorphosis which involves changes in the morphology of the supracellular ridges. Mainly involved in regulating pupal shape. Functionally, mainly involved in larvae survival, possibly by maintaining the normal morphology of the larval hindgut during development. The sequence is that of Protein obstructor-E from Drosophila melanogaster (Fruit fly).